Here is a 580-residue protein sequence, read N- to C-terminus: Phosphatase and actin regulator 1 (580 aa).

Phosphoserine is present on residues serine 67 and serine 78. Threonine 104 carries the phosphothreonine modification. The short motif at arginine 108 to lysine 129 is the Nuclear localization signal element. The stretch at alanine 138–tyrosine 163 is one RPEL 1 repeat. Residues glutamate 331–valine 351 form a disordered region. Residues serine 337–serine 348 show a composition bias toward low complexity. RPEL repeat units lie at residues aspartate 422–threonine 447, threonine 460–asparagine 485, and arginine 498–serine 523. The interval leucine 462–arginine 494 is disordered. Position 467 is a phosphoserine (serine 467). Residues threonine 471–arginine 494 show a composition bias toward basic and acidic residues. Serine 505 carries the post-translational modification Phosphoserine.

Belongs to the phosphatase and actin regulator family. In terms of assembly, interacts (via RPEL repeats) with ACTA1 and PPP1CA; ACTA1 and PPP1CA compete for the same binding site. As to expression, selectively expressed in brain. High levels are found in the olfactory tubercle, nucleus accumbens core and shell, caudate-putamen, cerebral cortex, hippocampus and piriform cortex. Moderate to high levels in the olfactory bulb, arcuate and ventromedial hypothalamus, subthalamic nucleus, amygdala, lateral septum, habenula and thalamus. Low expression, if any, in substantia nigra pars compacta/pars reticula and globus pallidus (at protein level).

It is found in the cytoplasm. The protein resides in the synapse. Its subcellular location is the nucleus. Its function is as follows. Binds actin monomers (G actin) and plays a role in multiple processes including the regulation of actin cytoskeleton dynamics, actin stress fibers formation, cell motility and survival, formation of tubules by endothelial cells, and regulation of PPP1CA activity. Involved in the regulation of cortical neuron migration and dendrite arborization. The sequence is that of Phosphatase and actin regulator 1 (Phactr1) from Rattus norvegicus (Rat).